Here is a 460-residue protein sequence, read N- to C-terminus: Ribosomal protein uS12 methylthiotransferase RimO (460 aa).

Residues 17–128 (PAVAVLHLGC…IVQVIQRAER (112 aa)) form the MTTase N-terminal domain. 6 residues coordinate [4Fe-4S] cluster: cysteine 26, cysteine 62, cysteine 91, cysteine 166, cysteine 170, and cysteine 173. The region spanning 152–381 (TTHAPVAYLR…MQLQQGIAFR (230 aa)) is the Radical SAM core domain. Residues 384–450 (REQVGQVVPV…PYDLFGQVVE (67 aa)) form the TRAM domain.

This sequence belongs to the methylthiotransferase family. RimO subfamily. [4Fe-4S] cluster is required as a cofactor.

It is found in the cytoplasm. It catalyses the reaction L-aspartate(89)-[ribosomal protein uS12]-hydrogen + (sulfur carrier)-SH + AH2 + 2 S-adenosyl-L-methionine = 3-methylsulfanyl-L-aspartate(89)-[ribosomal protein uS12]-hydrogen + (sulfur carrier)-H + 5'-deoxyadenosine + L-methionine + A + S-adenosyl-L-homocysteine + 2 H(+). Its function is as follows. Catalyzes the methylthiolation of an aspartic acid residue of ribosomal protein uS12. In Synechococcus sp. (strain JA-3-3Ab) (Cyanobacteria bacterium Yellowstone A-Prime), this protein is Ribosomal protein uS12 methylthiotransferase RimO.